The chain runs to 331 residues: MPTMKILTEGELRQIVPLDLDAVKCTEDAFRALAVPNAVKMPPILRLDVPDSRGEVDVKTAYIPGLGGFAIKISPGFFDNPKIGLPSTNGMMVLLSSQTGLVQALLLDNGYLTDVRTAAAGAVAAKHLSQQDASVATIFGAGVQARLQLRALTLVRPIRQARIWARDQLKAEALVEQLKLEHSFAISASDDPRQAVSGAHIVVTTTPADRPILVASWLEAGQHVTAMGSDAEHKNELDPAAIARADVYVADSLTQTRRLGELHHAIEAGLIARDAAFPELGEVIAGVKTGRTRESDITIADLTGTGVQDTAIATLAFQRAEERSAGSLFES.

It belongs to the ornithine cyclodeaminase/mu-crystallin family.

This is an uncharacterized protein from Sinorhizobium fredii (strain NBRC 101917 / NGR234).